A 681-amino-acid chain; its full sequence is MFRKKKKKRPEISAPQNFQHRVHTSFDPKEGKFVGLPPQWQNILDTLRRPKPVVDPSRITRVQLQPMKTVVRGSTMPMDGYISGLLNDIQKLSVISSNTLRGRSPTSRRRAQSLGLLGDEHWATDPDMYLQSPQSERTDPHGLYLSCNGGTPAGHKQMPWPEPQSPRVLPNGLAAKAQSLGPAEFQGASQRCLQLGACLQSSPPGASPPTGTNRRGMKAAKHGSEEARPQSCLVGSATGRPGGEGSPSPKTRESSLKRRLFRSMFLSTAATAPPSSSKPGPPPQSKPNSSFRPPQKDNPPSLVAKAQSLPSDQPVGTFSPLTTSDTSSPQKSLRTAPATGQLPGRSSPAGSPRTWHAQISTSNLYLPQDPTVAKGALAGEDTGVVTHEQFKAALRMVVDQGDPRLLLDSYVKIGEGSTGIVCLAREKHSGRQVAVKMMDLRKQQRRELLFNEVVIMRDYQHFNVVEMYKSYLVGEELWVLMEFLQGGALTDIVSQVRLNEEQIATVCEAVLQALAYLHAQGVIHRDIKSDSILLTLDGRVKLSDFGFCAQISKDVPKRKSLVGTPYWMAPEVISRSLYATEVDIWSLGIMVIEMVDGEPPYFSDSPVQAMKRLRDSPPPKLKNSHKVSPVLRDFLERMLVRDPQERATAQELLDHPFLLQTGLPECLVPLIQLYRKQTSTC.

Disordered stretches follow at residues 1 to 30, 200 to 256, and 268 to 355; these read MFRK…DPKE, QSSP…ESSL, and TAAT…PRTW. The CRIB domain occupies 12–25; sequence ISAPQNFQHRVHTS. Positions 26–406 are linker; that stretch reads FDPKEGKFVG…VVDQGDPRLL (381 aa). Low complexity-rich tracts occupy residues 201-212 and 268-278; these read SSPPGASPPTGT and TAATAPPSSSK. Residues 308 to 333 show a composition bias toward polar residues; it reads SLPSDQPVGTFSPLTTSDTSSPQKSL. Positions 407-658 constitute a Protein kinase domain; that stretch reads LDSYVKIGEG…AQELLDHPFL (252 aa). ATP contacts are provided by residues 413–421 and Lys-436; that span reads IGEGSTGIV. Catalysis depends on Asp-526, which acts as the Proton acceptor. Position 560 is a phosphoserine; by autocatalysis (Ser-560).

It belongs to the protein kinase superfamily. STE Ser/Thr protein kinase family. STE20 subfamily. In terms of assembly, interacts tightly with GTP-bound but not GDP-bound CDC42/p21 and RAC1. Interacts with the androgen receptor AR. Interacts with IQGAP1 and PPM1B. Post-translationally, autophosphorylated. Phosphorylated by MAP2K6/MAPKK6, leading to PAK6 activation.

Its subcellular location is the cytoplasm. The protein localises to the nucleus. The enzyme catalyses L-seryl-[protein] + ATP = O-phospho-L-seryl-[protein] + ADP + H(+). The catalysed reaction is L-threonyl-[protein] + ATP = O-phospho-L-threonyl-[protein] + ADP + H(+). Its function is as follows. Serine/threonine protein kinase that plays a role in the regulation of gene transcription. The kinase activity is induced by various effectors including AR or MAP2K6/MAPKK6. Phosphorylates the DNA-binding domain of androgen receptor/AR and thereby inhibits AR-mediated transcription. Also inhibits ESR1-mediated transcription. May play a role in cytoskeleton regulation by interacting with IQGAP1. May protect cells from apoptosis through phosphorylation of BAD. This Pongo abelii (Sumatran orangutan) protein is Serine/threonine-protein kinase PAK 6 (PAK6).